The chain runs to 100 residues: Biogenesis of lysosome-related organelles complex 1 subunit CNL1 (100 aa).

Residues 25–46 (SDRVKSLELEATRLVQRQNELV) are a coiled coil.

The protein belongs to the BLOC1S4 family. As to quaternary structure, component of the biogenesis of lysosome-related organelles complex-1 (BLOC-1).

The protein resides in the cytoplasm. Component of the biogenesis of lysosome-related organelles complex-1 (BLOC-1), a complex that is involved in endosomal cargo sorting. This Candida glabrata (strain ATCC 2001 / BCRC 20586 / JCM 3761 / NBRC 0622 / NRRL Y-65 / CBS 138) (Yeast) protein is Biogenesis of lysosome-related organelles complex 1 subunit CNL1 (CLN1).